The primary structure comprises 120 residues: MMILEGYGSVLAFFVIASLIPVIALSASKLLRPRGGGPERRTTYESGIEPMGEAWIQFNIRYYMFALVFVVFDVETLFLYPWAVTFQRLGLSAFFEVLIFIIVLLIGLVYAWRKGALEWS.

The next 3 helical transmembrane spans lie at 3–23 (ILEGYGSVLAFFVIASLIPVI), 64–84 (MFALVFVVFDVETLFLYPWAV), and 89–109 (LGLSAFFEVLIFIIVLLIGLV).

It belongs to the complex I subunit 3 family. As to quaternary structure, NDH is composed of at least 16 different subunits, 5 of which are encoded in the nucleus.

It is found in the plastid. The protein localises to the chloroplast thylakoid membrane. The enzyme catalyses a plastoquinone + NADH + (n+1) H(+)(in) = a plastoquinol + NAD(+) + n H(+)(out). It carries out the reaction a plastoquinone + NADPH + (n+1) H(+)(in) = a plastoquinol + NADP(+) + n H(+)(out). NDH shuttles electrons from NAD(P)H:plastoquinone, via FMN and iron-sulfur (Fe-S) centers, to quinones in the photosynthetic chain and possibly in a chloroplast respiratory chain. The immediate electron acceptor for the enzyme in this species is believed to be plastoquinone. Couples the redox reaction to proton translocation, and thus conserves the redox energy in a proton gradient. This chain is NAD(P)H-quinone oxidoreductase subunit 3, chloroplastic, found in Nephroselmis olivacea (Green alga).